The primary structure comprises 445 residues: UPF0210 protein SP_0239 (445 aa).

It belongs to the UPF0210 family. As to quaternary structure, homodimer.

This is UPF0210 protein SP_0239 from Streptococcus pneumoniae serotype 4 (strain ATCC BAA-334 / TIGR4).